The following is a 64-amino-acid chain: Large ribosomal subunit protein uL29 (64 aa).

Belongs to the universal ribosomal protein uL29 family.

In Methanothermobacter thermautotrophicus (strain ATCC 29096 / DSM 1053 / JCM 10044 / NBRC 100330 / Delta H) (Methanobacterium thermoautotrophicum), this protein is Large ribosomal subunit protein uL29 (rpl29).